A 236-amino-acid chain; its full sequence is uncharacterized protein (236 aa).

One can recognise an HTH gntR-type domain in the interval 5 to 73 (QSTVENAKEK…DRKGWFVTQP (69 aa)). The H-T-H motif DNA-binding region spans 33-52 (ERELGELLGIKRMTLRQALL).

This is an uncharacterized protein from Escherichia coli O157:H7.